A 157-amino-acid chain; its full sequence is Probable succinate transporter subunit YjjB (157 aa).

Transmembrane regions (helical) follow at residues 8-28 (FALAQDMILAAIPAVGFAMVF), 50-70 (MILMTSGLNIEWSTFMASMLV), 87-107 (VFTVAAVIPMFPGISAYTAMI), and 129-149 (FLTASSIVGALSIGLSIPGLW).

This sequence belongs to the ThrE exporter (TC 2.A.79) family. In terms of assembly, the transporter is composed of YjjB and YjjP.

The protein localises to the cell inner membrane. Involved in succinate export with YjjP. Both proteins are required for export. In Escherichia coli (strain ATCC 8739 / DSM 1576 / NBRC 3972 / NCIMB 8545 / WDCM 00012 / Crooks), this protein is Probable succinate transporter subunit YjjB.